Reading from the N-terminus, the 171-residue chain is NADH-quinone oxidoreductase subunit I (171 aa).

4Fe-4S ferredoxin-type domains lie at leucine 41–threonine 71 and glutamate 81–aspartate 110. Cysteine 51, cysteine 54, cysteine 57, cysteine 61, cysteine 90, cysteine 93, cysteine 96, and cysteine 100 together coordinate [4Fe-4S] cluster.

Belongs to the complex I 23 kDa subunit family. In terms of assembly, NDH-1 is composed of 14 different subunits. Subunits NuoA, H, J, K, L, M, N constitute the membrane sector of the complex. The cofactor is [4Fe-4S] cluster.

The protein resides in the cell inner membrane. It catalyses the reaction a quinone + NADH + 5 H(+)(in) = a quinol + NAD(+) + 4 H(+)(out). Functionally, NDH-1 shuttles electrons from NADH, via FMN and iron-sulfur (Fe-S) centers, to quinones in the respiratory chain. The immediate electron acceptor for the enzyme in this species is believed to be ubiquinone. Couples the redox reaction to proton translocation (for every two electrons transferred, four hydrogen ions are translocated across the cytoplasmic membrane), and thus conserves the redox energy in a proton gradient. The protein is NADH-quinone oxidoreductase subunit I of Methylococcus capsulatus (strain ATCC 33009 / NCIMB 11132 / Bath).